A 244-amino-acid chain; its full sequence is Phosphoadenosine 5'-phosphosulfate reductase (244 aa).

Residue Cys239 is the Nucleophile; cysteine thiosulfonate intermediate of the active site.

This sequence belongs to the PAPS reductase family. CysH subfamily.

The protein resides in the cytoplasm. It catalyses the reaction [thioredoxin]-disulfide + sulfite + adenosine 3',5'-bisphosphate + 2 H(+) = [thioredoxin]-dithiol + 3'-phosphoadenylyl sulfate. The protein operates within sulfur metabolism; hydrogen sulfide biosynthesis; sulfite from sulfate: step 3/3. Catalyzes the formation of sulfite from phosphoadenosine 5'-phosphosulfate (PAPS) using thioredoxin as an electron donor. This chain is Phosphoadenosine 5'-phosphosulfate reductase, found in Escherichia coli O8 (strain IAI1).